A 358-amino-acid chain; its full sequence is Peptide chain release factor 1 (358 aa).

N5-methylglutamine is present on Gln-233.

This sequence belongs to the prokaryotic/mitochondrial release factor family. Post-translationally, methylated by PrmC. Methylation increases the termination efficiency of RF1.

It is found in the cytoplasm. Its function is as follows. Peptide chain release factor 1 directs the termination of translation in response to the peptide chain termination codons UAG and UAA. This Clostridium botulinum (strain 657 / Type Ba4) protein is Peptide chain release factor 1.